Reading from the N-terminus, the 412-residue chain is L-threonine:uridine-5'-aldehyde transaldolase (412 aa).

Residue Lys-229 is modified to N6-(pyridoxal phosphate)lysine.

Belongs to the SHMT family. The cofactor is pyridoxal 5'-phosphate.

The catalysed reaction is uridine-5'-aldehyde + L-threonine = (5'S,6'S)-C-glycyluridine + acetaldehyde. The protein operates within antibiotic biosynthesis. Transaldolase involved in the biosynthesis of the capuramycin-type nucleoside antibiotic A-503083. Catalyzes the condensation of L-threonine and uridine-5'-aldehyde to form 5'-C-glycyluridine (GlyU). Forms (5'S,6'S)-GlyU. This is L-threonine:uridine-5'-aldehyde transaldolase from Streptomyces sp.